We begin with the raw amino-acid sequence, 443 residues long: UDP-N-acetylglucosamine 1-carboxyvinyltransferase 1 (443 aa).

22-23 provides a ligand contact to phosphoenolpyruvate; that stretch reads KN. R95 contributes to the UDP-N-acetyl-alpha-D-glucosamine binding site. The active-site Proton donor is C119. Residue C119 is modified to 2-(S-cysteinyl)pyruvic acid O-phosphothioketal. UDP-N-acetyl-alpha-D-glucosamine-binding positions include 124 to 128, D308, and V330; that span reads RPIDL.

Belongs to the EPSP synthase family. MurA subfamily.

The protein resides in the cytoplasm. It carries out the reaction phosphoenolpyruvate + UDP-N-acetyl-alpha-D-glucosamine = UDP-N-acetyl-3-O-(1-carboxyvinyl)-alpha-D-glucosamine + phosphate. It participates in cell wall biogenesis; peptidoglycan biosynthesis. Cell wall formation. Adds enolpyruvyl to UDP-N-acetylglucosamine. This is UDP-N-acetylglucosamine 1-carboxyvinyltransferase 1 from Oceanobacillus iheyensis (strain DSM 14371 / CIP 107618 / JCM 11309 / KCTC 3954 / HTE831).